The following is a 132-amino-acid chain: uncharacterized protein (132 aa).

Positions 39 to 93 are disordered; sequence HPAGASEALGALPPPRQLVEKRRVSPPRRLDQSGRDGGAVAKCSLSRGLSPPGWT. The span at 56–72 shows a compositional bias: basic and acidic residues; sequence LVEKRRVSPPRRLDQSG.

This is an uncharacterized protein from Homo sapiens (Human).